The following is a 279-amino-acid chain: Pantothenate synthetase (279 aa).

26 to 33 is a binding site for ATP; it reads MGNLHEGH. His33 acts as the Proton donor in catalysis. Residue Gln57 participates in (R)-pantoate binding. Residue Gln57 coordinates beta-alanine. An ATP-binding site is contributed by 144 to 147; it reads GKKD. Gln150 contributes to the (R)-pantoate binding site. Residues Val173 and 181–184 contribute to the ATP site; that span reads LSSR.

This sequence belongs to the pantothenate synthetase family. As to quaternary structure, homodimer.

It is found in the cytoplasm. It carries out the reaction (R)-pantoate + beta-alanine + ATP = (R)-pantothenate + AMP + diphosphate + H(+). Its pathway is cofactor biosynthesis; (R)-pantothenate biosynthesis; (R)-pantothenate from (R)-pantoate and beta-alanine: step 1/1. In terms of biological role, catalyzes the condensation of pantoate with beta-alanine in an ATP-dependent reaction via a pantoyl-adenylate intermediate. The protein is Pantothenate synthetase of Burkholderia vietnamiensis (strain G4 / LMG 22486) (Burkholderia cepacia (strain R1808)).